The chain runs to 232 residues: Ribosomal RNA large subunit methyltransferase E (232 aa).

S-adenosyl-L-methionine-binding residues include Gly-64, Trp-66, Asp-97, Asp-113, and Asp-138. Lys-178 acts as the Proton acceptor in catalysis.

This sequence belongs to the class I-like SAM-binding methyltransferase superfamily. RNA methyltransferase RlmE family.

Its subcellular location is the cytoplasm. The enzyme catalyses uridine(2552) in 23S rRNA + S-adenosyl-L-methionine = 2'-O-methyluridine(2552) in 23S rRNA + S-adenosyl-L-homocysteine + H(+). Its function is as follows. Specifically methylates the uridine in position 2552 of 23S rRNA at the 2'-O position of the ribose in the fully assembled 50S ribosomal subunit. In Leptothrix cholodnii (strain ATCC 51168 / LMG 8142 / SP-6) (Leptothrix discophora (strain SP-6)), this protein is Ribosomal RNA large subunit methyltransferase E.